Reading from the N-terminus, the 364-residue chain is Putative methylthioribose-1-phosphate isomerase (364 aa).

Substrate is bound by residues Arg57–Ala59, Arg100, and Gln206. Asp247 (proton donor) is an active-site residue. Asn257–Lys258 lines the substrate pocket.

Belongs to the eIF-2B alpha/beta/delta subunits family. MtnA subfamily.

It catalyses the reaction 5-(methylsulfanyl)-alpha-D-ribose 1-phosphate = 5-(methylsulfanyl)-D-ribulose 1-phosphate. Its function is as follows. Catalyzes the interconversion of methylthioribose-1-phosphate (MTR-1-P) into methylthioribulose-1-phosphate (MTRu-1-P). This chain is Putative methylthioribose-1-phosphate isomerase, found in Pyrococcus horikoshii (strain ATCC 700860 / DSM 12428 / JCM 9974 / NBRC 100139 / OT-3).